The sequence spans 239 residues: Geranylgeranylglyceryl phosphate synthase (239 aa).

Residues D19 and S48 each coordinate Mg(2+). Sn-glycerol 1-phosphate is bound by residues 167–173 (YLEAGSG), 197–198 (GG), and 219–220 (GT).

Belongs to the GGGP/HepGP synthase family. Group II subfamily. Mg(2+) is required as a cofactor.

It is found in the cytoplasm. The enzyme catalyses sn-glycerol 1-phosphate + (2E,6E,10E)-geranylgeranyl diphosphate = sn-3-O-(geranylgeranyl)glycerol 1-phosphate + diphosphate. The protein operates within membrane lipid metabolism; glycerophospholipid metabolism. In terms of biological role, prenyltransferase that catalyzes the transfer of the geranylgeranyl moiety of geranylgeranyl diphosphate (GGPP) to the C3 hydroxyl of sn-glycerol-1-phosphate (G1P). This reaction is the first ether-bond-formation step in the biosynthesis of archaeal membrane lipids. The protein is Geranylgeranylglyceryl phosphate synthase of Methanopyrus kandleri (strain AV19 / DSM 6324 / JCM 9639 / NBRC 100938).